The following is a 222-amino-acid chain: Large ribosomal subunit protein mL64 (222 aa).

Disordered regions lie at residues 14-40 (LTAT…PWWP) and 188-222 (KRLK…APSS). A coiled-coil region spans residues 144–213 (EKAQADKERR…AALAAAAAQD (70 aa)). The short motif at 184–200 (KKERKRLKEEKQRQKQE) is the Nuclear localization signal element. Residues 188–201 (KRLKEEKQRQKQEA) are compositionally biased toward basic and acidic residues. Residues 202 to 216 (RAAALAAAAAQDPAA) show a composition bias toward low complexity.

This sequence belongs to the mitochondrion-specific ribosomal protein mL64 family. In terms of assembly, component of the mitochondrial ribosome large subunit (39S) which comprises a 16S rRNA and about 50 distinct proteins. Interacts with GADD45A, GADD45B and GADD45G. Interacts with NR4A1 via the NR4A1 AB domain. Interacts with ATAD3A and ATAD3B.

Its subcellular location is the mitochondrion. The protein resides in the nucleus. Its function is as follows. Acts as a negative regulator of G1 to S cell cycle phase progression by inhibiting cyclin-dependent kinases. Inhibitory effects are additive with GADD45 proteins but also occur in the absence of GADD45 proteins. Acts as a repressor of the orphan nuclear receptor NR4A1 by inhibiting AB domain-mediated transcriptional activity. May be involved in the hormone-mediated regulation of NR4A1 transcriptional activity. May play a role in mitochondrial protein synthesis. The polypeptide is Large ribosomal subunit protein mL64 (GADD45GIP1) (Chlorocebus aethiops (Green monkey)).